We begin with the raw amino-acid sequence, 332 residues long: Glycerol-3-phosphate dehydrogenase [NAD(P)+] (332 aa).

W11, R30, and K108 together coordinate NADPH. Positions 108, 137, and 139 each coordinate sn-glycerol 3-phosphate. A141 serves as a coordination point for NADPH. K192, D245, S255, R256, and N257 together coordinate sn-glycerol 3-phosphate. K192 acts as the Proton acceptor in catalysis. R256 serves as a coordination point for NADPH. NADPH contacts are provided by V280 and E282.

It belongs to the NAD-dependent glycerol-3-phosphate dehydrogenase family.

Its subcellular location is the cytoplasm. It carries out the reaction sn-glycerol 3-phosphate + NAD(+) = dihydroxyacetone phosphate + NADH + H(+). The catalysed reaction is sn-glycerol 3-phosphate + NADP(+) = dihydroxyacetone phosphate + NADPH + H(+). It functions in the pathway membrane lipid metabolism; glycerophospholipid metabolism. Its function is as follows. Catalyzes the reduction of the glycolytic intermediate dihydroxyacetone phosphate (DHAP) to sn-glycerol 3-phosphate (G3P), the key precursor for phospholipid synthesis. The protein is Glycerol-3-phosphate dehydrogenase [NAD(P)+] of Paraburkholderia phymatum (strain DSM 17167 / CIP 108236 / LMG 21445 / STM815) (Burkholderia phymatum).